The sequence spans 368 residues: D-alanine--D-alanine ligase (368 aa).

One can recognise an ATP-grasp domain in the interval 145 to 348 (KRLLQGAGLH…YQDLITTLIE (204 aa)). 175-230 (ADQLGLPLFIKPANQGSSVGVNKATTEAEFTAAIEEAFSYDHKVLIEAAIKGREIE) contributes to the ATP binding site. Residues Asp302, Glu315, and Asn317 each coordinate Mg(2+).

Belongs to the D-alanine--D-alanine ligase family. Mg(2+) is required as a cofactor. It depends on Mn(2+) as a cofactor.

The protein resides in the cytoplasm. It carries out the reaction 2 D-alanine + ATP = D-alanyl-D-alanine + ADP + phosphate + H(+). It participates in cell wall biogenesis; peptidoglycan biosynthesis. In terms of biological role, cell wall formation. This is D-alanine--D-alanine ligase from Shouchella clausii (strain KSM-K16) (Alkalihalobacillus clausii).